Reading from the N-terminus, the 583-residue chain is Radixin (583 aa).

Positions 5–295 (INVRVTTMDA…GNHELYMRRR (291 aa)) constitute an FERM domain. 60–63 (KLNK) contacts a 1,2-diacyl-sn-glycero-3-phospho-(1D-myo-inositol). Position 83 is an N6-succinyllysine (lysine 83). Residue lysine 278 coordinates a 1,2-diacyl-sn-glycero-3-phospho-(1D-myo-inositol). Disordered regions lie at residues 310–330 (REEK…KKKR), 376–407 (DQER…AKQA), and 462–526 (ELKT…RVKK). Residues 376–400 (DQERKRAKEEAERLEKERRAAEEAK) show a composition bias toward basic and acidic residues. A compositionally biased stretch (pro residues) spans 469 to 480 (APPPPPPPPVIP). Basic and acidic residues-rich tracts occupy residues 483–492 (ENEHDEHDEN) and 506–525 (MNHR…ERVK). Threonine 564 is subject to Phosphothreonine; by ROCK2.

Binds NHERF1. Interacts with NHERF1, NHERF2, LAYN, MME/NEP and ICAM2. Interacts with CPNE1 (via VWFA domain) and CPNE4 (via VWFA domain). Interacts (via FERM domain) with SPN/CD43 cytoplasmic tail. Interacts with CD44. Interacts with CLIC5; may work together in a complex which also includes EZR and MYO6 to stabilize linkages between the plasma membrane and subjacent actin cytoskeleton at the base of stereocilia. Phosphorylated by tyrosine-protein kinases. Phosphorylation by ROCK2 suppresses the head-to-tail association of the N-terminal and C-terminal halves resulting in an opened conformation which is capable of actin and membrane-binding.

The protein resides in the cell membrane. The protein localises to the cytoplasm. Its subcellular location is the cytoskeleton. It is found in the cleavage furrow. It localises to the cell projection. The protein resides in the microvillus. The protein localises to the stereocilium. Its activity is regulated as follows. A head-to-tail association, of the N-terminal and C-terminal halves results in a closed conformation (inactive form) which is incapable of actin or membrane-binding. In terms of biological role, probably plays a crucial role in the binding of the barbed end of actin filaments to the plasma membrane. This is Radixin (RDX) from Homo sapiens (Human).